The sequence spans 248 residues: Cytochrome c oxidase subunit 2 (248 aa).

Over Met-1–Gln-43 the chain is Mitochondrial intermembrane. The chain crosses the membrane as a helical span at residues Val-44–Gly-65. Topologically, residues Lys-66 to Glu-79 are mitochondrial matrix. Residues Ile-80–Lys-99 traverse the membrane as a helical segment. The Mitochondrial intermembrane portion of the chain corresponds to Leu-100–Glu-248. Residues His-180, Cys-215, Glu-217, Cys-219, His-223, and Met-226 each coordinate Cu cation. Glu-217 contributes to the Mg(2+) binding site.

The protein belongs to the cytochrome c oxidase subunit 2 family. Component of the cytochrome c oxidase (complex IV, CIV), a multisubunit enzyme composed of a catalytic core of 3 subunits and several supernumerary subunits. The complex exists as a monomer or a dimer and forms supercomplexes (SCs) in the inner mitochondrial membrane with ubiquinol-cytochrome c oxidoreductase (cytochrome b-c1 complex, complex III, CIII). Requires Cu cation as cofactor.

Its subcellular location is the mitochondrion inner membrane. The enzyme catalyses 4 Fe(II)-[cytochrome c] + O2 + 8 H(+)(in) = 4 Fe(III)-[cytochrome c] + 2 H2O + 4 H(+)(out). In terms of biological role, component of the cytochrome c oxidase, the last enzyme in the mitochondrial electron transport chain which drives oxidative phosphorylation. The respiratory chain contains 3 multisubunit complexes succinate dehydrogenase (complex II, CII), ubiquinol-cytochrome c oxidoreductase (cytochrome b-c1 complex, complex III, CIII) and cytochrome c oxidase (complex IV, CIV), that cooperate to transfer electrons derived from NADH and succinate to molecular oxygen, creating an electrochemical gradient over the inner membrane that drives transmembrane transport and the ATP synthase. Cytochrome c oxidase is the component of the respiratory chain that catalyzes the reduction of oxygen to water. Electrons originating from reduced cytochrome c in the intermembrane space (IMS) are transferred via the dinuclear copper A center (CU(A)) of subunit 2 and heme A of subunit 1 to the active site in subunit 1, a binuclear center (BNC) formed by heme A3 and copper B (CU(B)). The BNC reduces molecular oxygen to 2 water molecules using 4 electrons from cytochrome c in the IMS and 4 protons from the mitochondrial matrix. This is Cytochrome c oxidase subunit 2 (COII) from Metridium senile (Brown sea anemone).